Here is a 525-residue protein sequence, read N- to C-terminus: Probable metalloreductase AIM14 (525 aa).

7 helical membrane-spanning segments follow: residues 13–33 (NIKY…YIAV), 52–72 (PLWL…VIHV), 82–102 (FGRL…RPSP), 118–138 (LGRL…VHFV), 152–172 (FLGV…LPFF), 179–199 (LFYT…IFHA), and 203–223 (VGWL…YRVL). The region spanning 82–194 (FGRLCYALLP…YLSAWFVAIA (113 aa)) is the Ferric oxidoreductase domain. The FAD-binding FR-type domain occupies 215 to 344 (GSSLLYRVLA…GGAGISFALP (130 aa)). Residues 407 to 478 (LLSEDMEMEE…YHDGRPQPAD (72 aa)) form a disordered region. Acidic residues predominate over residues 410 to 438 (EDMEMEEIGQEDEDRERDELDDLLSEDEG). The segment covering 453–463 (GKDQDNGKREA) has biased composition (basic and acidic residues).

The protein belongs to the ferric reductase (FRE) family. AIM14 subfamily.

The protein resides in the membrane. In terms of biological role, probable cell surface metalloreductase. May be involved in iron or copper homeostasis. This Yarrowia lipolytica (strain CLIB 122 / E 150) (Yeast) protein is Probable metalloreductase AIM14 (AIM14).